The chain runs to 85 residues: Probable oxaloacetate decarboxylase gamma chain (85 aa).

The chain crosses the membrane as a helical span at residues 11–33 (AATLMVTGMAVVFIFLTILVYLV).

The protein belongs to the OadG family. As to quaternary structure, heterotrimer of an alpha, a beta and a gamma subunit. Requires Na(+) as cofactor.

The protein resides in the cell membrane. It catalyses the reaction oxaloacetate + 2 Na(+)(in) + H(+) = pyruvate + 2 Na(+)(out) + CO2. In terms of biological role, catalyzes the decarboxylation of oxaloacetate coupled to Na(+) translocation. The protein is Probable oxaloacetate decarboxylase gamma chain of Vibrio parahaemolyticus serotype O3:K6 (strain RIMD 2210633).